The following is an 840-amino-acid chain: Protein translocase subunit SecA (840 aa).

Residues glutamine 89, glycine 107–threonine 111, and aspartate 514 each bind ATP.

It belongs to the SecA family. Monomer and homodimer. Part of the essential Sec protein translocation apparatus which comprises SecA, SecYEG and auxiliary proteins SecDF-YajC and YidC.

The protein localises to the cell inner membrane. Its subcellular location is the cytoplasm. The catalysed reaction is ATP + H2O + cellular proteinSide 1 = ADP + phosphate + cellular proteinSide 2.. Its function is as follows. Part of the Sec protein translocase complex. Interacts with the SecYEG preprotein conducting channel. Has a central role in coupling the hydrolysis of ATP to the transfer of proteins into and across the cell membrane, serving as an ATP-driven molecular motor driving the stepwise translocation of polypeptide chains across the membrane. This chain is Protein translocase subunit SecA, found in Blochmanniella floridana.